The following is a 182-amino-acid chain: Adenylate kinase (182 aa).

12–17 (GAGKGT) lines the ATP pocket. The tract at residues 32–61 (STGDLLRDEVSSGSVLGIKAAEIMNKGELV) is NMP. AMP-binding positions include Thr-33, Arg-38, 59 to 61 (ELV), 85 to 88 (GFPR), and Gln-92. Residues 126-132 (ERGRQDD) are LID. Arg-127 serves as a coordination point for ATP. Residues Arg-129 and Arg-140 each coordinate AMP. Ala-168 contributes to the ATP binding site.

The protein belongs to the adenylate kinase family. Monomer.

The protein localises to the cytoplasm. It carries out the reaction AMP + ATP = 2 ADP. Its pathway is purine metabolism; AMP biosynthesis via salvage pathway; AMP from ADP: step 1/1. Catalyzes the reversible transfer of the terminal phosphate group between ATP and AMP. Plays an important role in cellular energy homeostasis and in adenine nucleotide metabolism. This chain is Adenylate kinase, found in Prochlorococcus marinus (strain NATL2A).